Reading from the N-terminus, the 110-residue chain is Large ribosomal subunit protein uL22 (110 aa).

Belongs to the universal ribosomal protein uL22 family. In terms of assembly, part of the 50S ribosomal subunit.

Functionally, this protein binds specifically to 23S rRNA; its binding is stimulated by other ribosomal proteins, e.g. L4, L17, and L20. It is important during the early stages of 50S assembly. It makes multiple contacts with different domains of the 23S rRNA in the assembled 50S subunit and ribosome. Its function is as follows. The globular domain of the protein is located near the polypeptide exit tunnel on the outside of the subunit, while an extended beta-hairpin is found that lines the wall of the exit tunnel in the center of the 70S ribosome. This is Large ribosomal subunit protein uL22 from Verminephrobacter eiseniae (strain EF01-2).